The chain runs to 350 residues: Biotin synthase 1 (350 aa).

Residues 71 to 296 (EEVEVEGIIS…KTILRFAGGR (226 aa)) form the Radical SAM core domain. [4Fe-4S] cluster is bound by residues C86, C90, and C93. [2Fe-2S] cluster contacts are provided by C129, C221, and R291.

This sequence belongs to the radical SAM superfamily. Biotin synthase family. In terms of assembly, homodimer. It depends on [4Fe-4S] cluster as a cofactor. [2Fe-2S] cluster is required as a cofactor.

It catalyses the reaction (4R,5S)-dethiobiotin + (sulfur carrier)-SH + 2 reduced [2Fe-2S]-[ferredoxin] + 2 S-adenosyl-L-methionine = (sulfur carrier)-H + biotin + 2 5'-deoxyadenosine + 2 L-methionine + 2 oxidized [2Fe-2S]-[ferredoxin]. Its pathway is cofactor biosynthesis; biotin biosynthesis; biotin from 7,8-diaminononanoate: step 2/2. In terms of biological role, catalyzes the conversion of dethiobiotin (DTB) to biotin by the insertion of a sulfur atom into dethiobiotin via a radical-based mechanism. This is Biotin synthase 1 from Corynebacterium diphtheriae (strain ATCC 700971 / NCTC 13129 / Biotype gravis).